A 359-amino-acid polypeptide reads, in one-letter code: 4-galactosyl-N-acetylglucosaminide 3-alpha-L-fucosyltransferase FUT6 (359 aa).

The Cytoplasmic portion of the chain corresponds to 1–14; the sequence is MDPLGPAKPQWSCR. The chain crosses the membrane as a helical; Signal-anchor for type II membrane protein span at residues 15 to 34; the sequence is CCLTTLLFQLLVAVCFFSYL. Over 35 to 359 the chain is Lumenal; sequence RVSRDDPTVY…QTRSITAWFT (325 aa). N-linked (GlcNAc...) asparagine glycosylation is found at asparagine 46, asparagine 91, asparagine 153, and asparagine 184. Positions 73–112 are determines site-specific fucosylation; that stretch reads KPTALPRCSEMLPGTADCNITADRKVYPQADAVIVHHREV.

The protein belongs to the glycosyltransferase 10 family. Homodimer and monomer. Monomer (secreted form). N-glycosylated. Post-translationally, proteolytic cleavage releases a secreted glycoform of 43 kDa.

Its subcellular location is the golgi apparatus. The protein resides in the golgi stack membrane. It is found in the secreted. It catalyses the reaction a beta-D-galactosyl-(1-&gt;4)-N-acetyl-beta-D-glucosaminyl derivative + GDP-beta-L-fucose = a beta-D-galactosyl-(1-&gt;4)-[alpha-L-fucosyl-(1-&gt;3)]-N-acetyl-beta-D-glucosaminyl derivative + GDP + H(+). The enzyme catalyses an N-acetyl-alpha-neuraminyl-(2-&gt;3)-beta-D-galactosyl-(1-&gt;4)-N-acetyl-beta-D-glucosaminyl derivative + GDP-beta-L-fucose = an alpha-Neu5Ac-(2-&gt;3)-beta-D-Gal-(1-&gt;4)-[alpha-L-Fuc-(1-&gt;3)]-beta-D-GlcNAc derivative + GDP + H(+). It carries out the reaction an alpha-Neu5Ac-(2-&gt;3)-beta-D-Gal-(1-&gt;4)-beta-D-GlcNAc-(1-&gt;3)-beta-D-Gal-(1-&gt;4)-[alpha-L-Fuc-(1-&gt;3)]-beta-D-GlcNAc derivative + GDP-beta-L-fucose = an alpha-Neu5Ac-(2-&gt;3)-beta-D-Gal-(1-&gt;4)-[alpha-L-Fuc-(1-&gt;3)]-beta-D-GlcNAc-(1-&gt;3)-beta-D-Gal-(1-&gt;4)-[alpha-L-Fuc-(1-&gt;3)]-beta-D-GlcNAc derivative + GDP + H(+). The catalysed reaction is a neolactoside nLc6Cer + GDP-beta-L-fucose = beta-D-Gal-(1-&gt;4)-[alpha-L-Fuc-(1-&gt;3)]-beta-D-GlcNAc-(1-&gt;3)-beta-D-Gal-(1-&gt;4)-beta-D-GlcNAc-(1-&gt;3)-beta-D-Gal-(1-&gt;4)-beta-D-Glc-(1&lt;-&gt;1')-Cer + GDP + H(+). It catalyses the reaction a neolactoside nLc6Cer + GDP-beta-L-fucose = beta-D-galactosyl-(1-&gt;4)-N-acetyl-beta-D-glucosaminyl-(1-&gt;3)-beta-D-galactosyl-(1-&gt;4)-[alpha-L-fucosyl-(1-&gt;3)]-N-acetyl-beta-D-glucosaminyl-(1-&gt;3)-beta-D-galactosyl-(1-&gt;4)-beta-D-glucosyl-(1&lt;-&gt;1')-ceramide + GDP + H(+). The enzyme catalyses a neolactoside VI(3)-alpha-NeuNAc-nLc6Cer + GDP-beta-L-fucose = a neolactoside VI(3)-alpha-NeuAc,V(3)-alphaFuc-nLc6Cer + GDP + H(+). It carries out the reaction beta-D-galactosyl-(1-&gt;4)-N-acetyl-D-glucosamine + GDP-beta-L-fucose = beta-D-galactosyl-(1-&gt;4)-[alpha-L-fucosyl-(1-&gt;3)]-N-acetyl-D-glucosamine + GDP + H(+). The catalysed reaction is N-acetyl-alpha-neuraminosyl-(2-&gt;3)-beta-D-galactosyl-(1-&gt;4)-N-acetyl-beta-D-glucosamine + GDP-beta-L-fucose = N-acetyl-alpha-neuraminosyl-(2-&gt;3)-beta-D-galactosyl-(1-&gt;4)-[alpha-L-fucosyl-(1-&gt;3)]-N-acetyl-beta-D-glucosamine + GDP + H(+). It catalyses the reaction lactose + GDP-beta-L-fucose = beta-D-galactosyl-(1-&gt;4)-[alpha-L-fucosyl-(1-&gt;3)]-D-glucose + GDP + H(+). The enzyme catalyses alpha-L-Fuc-(1-&gt;2)-beta-D-Gal-(1-&gt;4)-D-Glc + GDP-beta-L-fucose = alpha-L-Fuc-(1-&gt;2)-beta-D-Gal-(1-&gt;4)-[alpha-L-Fuc-(1-&gt;3)]-D-Glc + GDP + H(+). It carries out the reaction a beta-D-galactosyl-(1-&gt;4)-N-acetyl-beta-D-6-sulfooxy-glucosaminyl derivative + GDP-beta-L-fucose = a beta-D-galactosyl-(1-&gt;4)-[alpha-L-fucosyl-(1-&gt;3)]-N-acetyl-beta-D-6-sulfooxy-glucosaminyl derivative + GDP + H(+). It participates in protein modification; protein glycosylation. Its function is as follows. Catalyzes the transfer of L-fucose, from a guanosine diphosphate-beta-L-fucose, to the N-acetyl glucosamine (GlcNAc) of a distal alpha2,3 sialylated lactosamine unit of a glycoprotein- or glycolipid-linked sialopolylactosamines chain or of a distal or internal lactosamine unit of a neutral glycoprotein- or glycolipid-linked polylactosamines chain through an alpha-1,3 glycosidic linkage and participates in surface expression of the sialyl Lewis X (sLe(x)), Lewis X (Le(x)) and non sialylated VIM2 determinants. Moreover transfers fucose to H-type 2 (Fucalpha1-2Galbeta1-4GlcNAc) chain acceptor substrates and participates in difucosylated sialyl Lewis x determinants. Also fucosylates a polylactosamine substrate having a 6 sulfate modification at the GlcNAc moiety and gives rise to sialyl and non-sialyl 6-sulfo lewis X. Does not have activity towards type 1 ((Galbeta1-3GlcNAc)) and H-type 1 chain (Fucalpha1-2Galbeta1-3GlcNAc) acceptors substrates. In Gorilla gorilla gorilla (Western lowland gorilla), this protein is 4-galactosyl-N-acetylglucosaminide 3-alpha-L-fucosyltransferase FUT6.